Consider the following 94-residue polypeptide: Large ribosomal subunit protein uL23 (94 aa).

The protein belongs to the universal ribosomal protein uL23 family. As to quaternary structure, part of the 50S ribosomal subunit. Contacts protein L29, and trigger factor when it is bound to the ribosome.

Its function is as follows. One of the early assembly proteins it binds 23S rRNA. One of the proteins that surrounds the polypeptide exit tunnel on the outside of the ribosome. Forms the main docking site for trigger factor binding to the ribosome. The polypeptide is Large ribosomal subunit protein uL23 (Latilactobacillus sakei subsp. sakei (strain 23K) (Lactobacillus sakei subsp. sakei)).